The following is a 504-amino-acid chain: MEAPLQTEMVELVPNGKHSEGLLPVITPMAGNQRVEDPARSCMEGKSFLQKSPSKEPHFTDFEGKTSFGMSVFNLSNAIMGSGILGLAYAMANTGIILFLFLLTAVALLSSYSIHLLLKSSGVVGIRAYEQLGYRAFGTPGKLAAALAITLQNIGAMSSYLYIIKSELPLVIQTFLNLEEKTSDWYMNGNYLVILVSVTIILPLALMRQLGYLGYSSGFSLSCMVFFLIAVIYKKFHVPCPLPPNFNNTTGNFSHVEIVKEKVQLQVEPEASAFCTPSYFTLNSQTAYTIPIMAFAFVCHPEVLPIYTELKDPSKKKMQHISNLSIAVMYIMYFLAALFGYLTFYNGVESELLHTYSKVDPFDVLILCVRVAVLTAVTLTVPIVLFPVRRAIQQMLFPNQEFSWLRHVLIAVGLLTCINLLVIFAPNILGIFGVIGATSAPFLIFIFPAIFYFRIMPTEKEPARSTPKILALCFAMLGFLLMTMSLSFIIIDWASGTSRHGGNH.

Asn74 carries N-linked (GlcNAc...) asparagine glycosylation. Transmembrane regions (helical) follow at residues 83-103 (GILG…LFLL), 106-126 (VALL…VVGI), 144-164 (AAAL…LYII), 187-207 (MNGN…LALM), and 213-233 (LGYS…AVIY). Cysteines 240 and 275 form a disulfide. Asn247, Asn248, Asn252, and Asn323 each carry an N-linked (GlcNAc...) asparagine glycan. Transmembrane regions (helical) follow at residues 324–344 (LSIA…YLTF), 366–386 (ILCV…IVLF), 408–428 (VLIA…APNI), 431–451 (IFGV…PAIF), and 471–491 (ALCF…FIII).

The protein belongs to the amino acid/polyamine transporter 2 family.

It localises to the cell membrane. Its subcellular location is the basolateral cell membrane. The catalysed reaction is L-glutamine(out) + Na(+)(out) + H(+)(in) = L-glutamine(in) + Na(+)(in) + H(+)(out). It carries out the reaction L-asparagine(out) + Na(+)(out) + H(+)(in) = L-asparagine(in) + Na(+)(in) + H(+)(out). It catalyses the reaction L-histidine(out) + Na(+)(out) + H(+)(in) = L-histidine(in) + Na(+)(in) + H(+)(out). Symporter that cotransports specific neutral amino acids and sodium ions, coupled to an H(+) antiporter activity. Mainly participates in the glutamate-GABA-glutamine cycle in brain where it transports L-glutamine from astrocytes in the intercellular space for the replenishment of both neurotransmitters glutamate and gamma-aminobutyric acid (GABA) in neurons and also functions as the major influx transporter in ganglion cells mediating the uptake of glutamine. The transport activity is specific for L-glutamine, L-histidine and L-asparagine. The transport is electroneutral coupled to the cotransport of 1 Na(+) and the antiport of 1 H(+). The transport is pH dependent, saturable, Li(+) tolerant and functions in both direction depending on the concentration gradients of its substrates and cotransported ions. Also mediates an amino acid-gated H(+) conductance that is not stoichiometrically coupled to the amino acid transport but which influences the ionic gradients that drive the amino acid transport. In addition, may play a role in nitrogen metabolism, amino acid homeostasis, glucose metabolism and renal ammoniagenesis. The chain is Sodium-coupled neutral amino acid transporter 3 from Homo sapiens (Human).